The primary structure comprises 69 residues: Regulatory protein MokC (69 aa).

A helical membrane pass occupies residues 24-44; that stretch reads KAMIVALIVICITAVVAALVT.

This sequence belongs to the Hok/Gef family.

It localises to the cell inner membrane. Might be the toxic component of a type I toxin-antitoxin (TA) system. Regulatory peptide which completely overlaps hokC and enables hokC expression. The protein is Regulatory protein MokC (mokC) of Escherichia coli (strain K12).